The chain runs to 296 residues: Triplex capsid protein 2 (296 aa).

Belongs to the herpesviridae TRX2 protein family. In terms of assembly, interacts with TRX1 and major capisd protein/MCP.

The protein localises to the virion. It is found in the host nucleus. Functionally, structural component of the T=16 icosahedral capsid. The capsid is composed of pentamers and hexamers of major capsid protein/MCP, which are linked together by heterotrimers called triplexes. These triplexes are formed by a single molecule of triplex protein 1/TRX1 and two copies of triplex protein 2/TRX2. Additionally, TRX1 is required for efficient transport of TRX2 to the nucleus, which is the site of capsid assembly. The chain is Triplex capsid protein 2 from Human herpesvirus 6A (strain Uganda-1102) (HHV-6 variant A).